Here is a 471-residue protein sequence, read N- to C-terminus: SVGFKAGVKEYKLTYYTPEYETKDTDILAAFRVTPQPGVPPEEAGAAVAAESSTGTWTTVWTDGLTSLDRYKGRCYHIEPVAGEEDQYIAYVAYPLDLFEEGSVTNMFTSIVGNVFGFKALRALRLEDLRIPVAYIKTFQGPPHAIQVERDKLNKYGRPLLGCTIKPKLGLSAKNYGRAVYECLRGGLDFTKDDENVNSQPFMRWRDRFLFCAEAXYKAQAETGEIKGHYLNATAGTCEEMIKRAVFARELGVPIVMHDYLTGGFTANTSLAHYCRDNGLLLHIHRAMHAVIDRQKNHGMHFRVLXKALRMSGGDHIHAGTVVGKLEGERDITLGFVDLLRDDFIEKDRSRGIYFTQDWVSLPGVIPVASGGIHVWHMPALTEIFGDDAVLQFGGGTLGHPWGNAPGAVANRVALEACVKARNEGRDLAAEGNDIIREASKWSPELAAACEVWKEIRFNFQAVDTLDPLKS.

Position 5 is an N6,N6,N6-trimethyllysine (Lys-5). Positions 114 and 164 each coordinate substrate. The active-site Proton acceptor is Lys-166. A substrate-binding site is contributed by Lys-168. The Mg(2+) site is built by Lys-192, Asp-194, and Glu-195. The residue at position 192 (Lys-192) is an N6-carboxylysine. His-285 (proton acceptor) is an active-site residue. Positions 286, 318, and 370 each coordinate substrate.

Belongs to the RuBisCO large chain family. Type I subfamily. Heterohexadecamer of 8 large chains and 8 small chains; disulfide-linked. The disulfide link is formed within the large subunit homodimers. Mg(2+) serves as cofactor. In terms of processing, the disulfide bond which can form in the large chain dimeric partners within the hexadecamer appears to be associated with oxidative stress and protein turnover.

The protein localises to the plastid. It is found in the chloroplast. It carries out the reaction 2 (2R)-3-phosphoglycerate + 2 H(+) = D-ribulose 1,5-bisphosphate + CO2 + H2O. The catalysed reaction is D-ribulose 1,5-bisphosphate + O2 = 2-phosphoglycolate + (2R)-3-phosphoglycerate + 2 H(+). Functionally, ruBisCO catalyzes two reactions: the carboxylation of D-ribulose 1,5-bisphosphate, the primary event in carbon dioxide fixation, as well as the oxidative fragmentation of the pentose substrate in the photorespiration process. Both reactions occur simultaneously and in competition at the same active site. The protein is Ribulose bisphosphate carboxylase large chain of Strychnos nux-vomica (Poison nut).